Consider the following 337-residue polypeptide: Phenylalanine--tRNA ligase alpha subunit (337 aa).

E252 contacts Mg(2+).

The protein belongs to the class-II aminoacyl-tRNA synthetase family. Phe-tRNA synthetase alpha subunit type 1 subfamily. In terms of assembly, tetramer of two alpha and two beta subunits. Requires Mg(2+) as cofactor.

The protein localises to the cytoplasm. The enzyme catalyses tRNA(Phe) + L-phenylalanine + ATP = L-phenylalanyl-tRNA(Phe) + AMP + diphosphate + H(+). This Saccharophagus degradans (strain 2-40 / ATCC 43961 / DSM 17024) protein is Phenylalanine--tRNA ligase alpha subunit.